Reading from the N-terminus, the 339-residue chain is MASDTEWVLESVLGFVSGPVWTVPVLEFMEQKCSVFDDEEENKLSYTEIHNEYKELVETLLTQHLNEVGISEEQFQEACTAPLAHSATLKTILQPVLAVEDFKIFKAMMVQKNIELQLQAIRIIQERNGVLPDCLQHGRDIISDLEQQEMKLVSEALRLSKEEYEREQLRRSAKELNLTLGEHSENKQSSGSERTPNNTELPVKTQKEEKQPVNMLESPYKEVSIKLKEMSNTEAAEAWLEQARKEAGILSSVTNLSQAEKEQLQKRAEYLRRRREELLAKKQESKKMAQNSEEHEEKATCSKQEMTEEEKKSLQRRKRLAEKLKEEVILSCEKSGSAS.

Coiled-coil stretches lie at residues 142 to 188 (ISDL…ENKQ) and 255 to 330 (NLSQ…EVIL). Disordered stretches follow at residues 177 to 212 (NLTL…EKQP) and 281 to 318 (KKQE…QRRK). Positions 187 to 200 (KQSSGSERTPNNTE) are enriched in polar residues. Over residues 281 to 313 (KKQESKKMAQNSEEHEEKATCSKQEMTEEEKKS) the composition is skewed to basic and acidic residues.

It belongs to the CFAP36 family.

The protein localises to the nucleus. Its subcellular location is the cytoplasm. It is found in the cell projection. It localises to the cilium. The protein resides in the flagellum. This is Cilia- and flagella-associated protein 36 from Xenopus tropicalis (Western clawed frog).